Reading from the N-terminus, the 665-residue chain is Cinnamate reductase (665 aa).

An FMN-binding site is contributed by Q109. Y182 serves as the catalytic Proton donor. Residues R230, R319, and 341-342 (GR) each bind FMN. Positions 365, 368, 372, and 384 each coordinate [4Fe-4S] cluster. Positions 415, 434, 442, 452, and 479 each coordinate FAD.

In the N-terminal section; belongs to the NADH:flavin oxidoreductase/NADH oxidase family. Requires FMN as cofactor. FAD is required as a cofactor. It depends on [4Fe-4S] cluster as a cofactor.

The enzyme catalyses 3-phenylpropanoate + NAD(+) = (E)-cinnamate + NADH + H(+). Its pathway is amino-acid degradation; L-phenylalanine degradation. Involved in the fermentation of L-phenylalanine via a Stickland reaction. Catalyzes the reduction of (E)-cinnamate to yield 3-phenylpropionate. This chain is Cinnamate reductase, found in Clostridium sporogenes (strain ATCC 7955 / DSM 767 / NBRC 16411 / NCIMB 8053 / NCTC 8594 / PA 3679).